Here is a 427-residue protein sequence, read N- to C-terminus: POU domain protein CF1A (427 aa).

Disordered regions lie at residues 39–77, 196–217, 288–309, and 390–427; these read YMQH…GLGS, HHHM…TPTS, TTGS…KKRT, and HDMH…LAAH. Residues 49–66 are compositionally biased toward low complexity; the sequence is AAAAAAHHQLPSSPSPNG. Residues 67-77 are compositionally biased toward gly residues; the sequence is QGNGGGLGLGS. Residues 212-286 form the POU-specific domain; the sequence is EDTPTSDDLE…LLQKWLEEAD (75 aa). The homeobox DNA-binding region spans 304–363; the sequence is KRKKRTSIEVSVKGALEQHFHKQPKPSAQEITSLADSLQLEKEVVRVWFCNRRQKEKRMT.

This sequence belongs to the POU transcription factor family. Class-3 subfamily. Coexpressed with acj6 in overlapping subsets of neurons in the embryonic epidermis and central nervous system. First detected in the precursor of the tracheal pits and the stomodeal invagination and later in the peripheral nervous system.

Its subcellular location is the nucleus. In terms of biological role, binds to a DNA sequence element required for the expression of the dopa decarboxylase gene (Ddc) in specific dopaminergic neurons. Could also play an early role in specific ectodermal cells, and a subsequent role in the embryonic nervous system. The chain is POU domain protein CF1A (vvl) from Drosophila melanogaster (Fruit fly).